The following is a 397-amino-acid chain: Elongation factor Tu-2 (397 aa).

Residues 10-206 form the tr-type G domain; sequence KPHVNIGTIG…AVDEFVPEPV (197 aa). Positions 19–26 are G1; it reads GHIDHGKT. 19–26 contributes to the GTP binding site; it reads GHIDHGKT. Thr-26 is a Mg(2+) binding site. The segment at 62 to 66 is G2; it reads GITIS. The segment at 83 to 86 is G3; sequence DCPG. GTP contacts are provided by residues 83 to 87 and 138 to 141; these read DCPGH and NKTD. The tract at residues 138-141 is G4; the sequence is NKTD. Residues 176–178 form a G5 region; sequence SAL.

The protein belongs to the TRAFAC class translation factor GTPase superfamily. Classic translation factor GTPase family. EF-Tu/EF-1A subfamily. Monomer.

It localises to the cytoplasm. It carries out the reaction GTP + H2O = GDP + phosphate + H(+). Functionally, GTP hydrolase that promotes the GTP-dependent binding of aminoacyl-tRNA to the A-site of ribosomes during protein biosynthesis. The polypeptide is Elongation factor Tu-2 (Streptomyces ramocissimus).